Consider the following 163-residue polypeptide: Nucleotide-binding protein Mmcs_0777 (163 aa).

Belongs to the YajQ family.

Functionally, nucleotide-binding protein. The chain is Nucleotide-binding protein Mmcs_0777 from Mycobacterium sp. (strain MCS).